Consider the following 211-residue polypeptide: Probable transcriptional regulatory protein SgaR (211 aa).

The Response regulatory domain maps to 10 to 126 (EVSIVDQNPV…VLLEAVVSVA (117 aa)). Aspartate 15 carries the 4-aspartylphosphate modification. Positions 141–206 (NHDPLESLTA…MAVALHVSIN (66 aa)) constitute an HTH luxR-type domain. Residues 165-184 (NLQIAARTGISRNTVKYHLK) constitute a DNA-binding region (H-T-H motif).

Functionally, not known. Could act on the sgaA gene expression. In Hyphomicrobium methylovorum, this protein is Probable transcriptional regulatory protein SgaR (sgaR).